Consider the following 454-residue polypeptide: Asparagine--tRNA ligase (454 aa).

The protein belongs to the class-II aminoacyl-tRNA synthetase family. Homodimer.

The protein localises to the cytoplasm. It catalyses the reaction tRNA(Asn) + L-asparagine + ATP = L-asparaginyl-tRNA(Asn) + AMP + diphosphate + H(+). This is Asparagine--tRNA ligase from Ureaplasma urealyticum serovar 10 (strain ATCC 33699 / Western).